The chain runs to 247 residues: Triosephosphate isomerase (247 aa).

2 residues coordinate substrate: Asn-10 and Lys-12. His-95 functions as the Electrophile in the catalytic mechanism. Catalysis depends on Glu-165, which acts as the Proton acceptor.

It belongs to the triosephosphate isomerase family. Homodimer.

The enzyme catalyses D-glyceraldehyde 3-phosphate = dihydroxyacetone phosphate. It participates in carbohydrate biosynthesis; gluconeogenesis. The protein operates within carbohydrate degradation; glycolysis; D-glyceraldehyde 3-phosphate from glycerone phosphate: step 1/1. This chain is Triosephosphate isomerase (TPI1), found in Yarrowia lipolytica (strain CLIB 122 / E 150) (Yeast).